Reading from the N-terminus, the 201-residue chain is Large ribosomal subunit protein uL4 (201 aa).

A disordered region spans residues 43–71 (TRAQKTRSDVSGGGKKPWRQKGTGRARSG).

Belongs to the universal ribosomal protein uL4 family. As to quaternary structure, part of the 50S ribosomal subunit.

Functionally, one of the primary rRNA binding proteins, this protein initially binds near the 5'-end of the 23S rRNA. It is important during the early stages of 50S assembly. It makes multiple contacts with different domains of the 23S rRNA in the assembled 50S subunit and ribosome. In terms of biological role, forms part of the polypeptide exit tunnel. The chain is Large ribosomal subunit protein uL4 from Psychromonas ingrahamii (strain DSM 17664 / CCUG 51855 / 37).